A 136-amino-acid chain; its full sequence is Keratin-associated protein 9-3 (136 aa).

A run of 11 repeats spans residues 3–7 (CCATS), 21–25 (CCQPT), 31–35 (CCQPS), 36–40 (CCEAS), 41–45 (CCQPS), 46–50 (CCETG), 87–91 (CCVVS), 97–101 (CCQLH), 107–111 (CCRPS), 117–121 (CCRPA), and 126–130 (CCQPS). Positions 21–130 (CCQPTCTQSS…ACCCYCCQPS (110 aa)) are 11 X 5 AA repeats of C-C-[AEQVR]-[ALPTV]-[AGHST].

The protein belongs to the KRTAP type 9 family. As to quaternary structure, interacts with hair keratins.

Its function is as follows. In the hair cortex, hair keratin intermediate filaments are embedded in an interfilamentous matrix, consisting of hair keratin-associated proteins (KRTAP), which are essential for the formation of a rigid and resistant hair shaft through their extensive disulfide bond cross-linking with abundant cysteine residues of hair keratins. The matrix proteins include the high-sulfur and high-glycine-tyrosine keratins. The chain is Keratin-associated protein 9-3 from Mus musculus (Mouse).